Consider the following 402-residue polypeptide: Thyroid hormone receptor alpha (402 aa).

The segment at 1–22 (MEQKPSTLDPLSEPEDTRWLDG) is disordered. Residues 1–50 (MEQKPSTLDPLSEPEDTRWLDGKRKRKSSQCLVKSSMSGYIPSYLDKDEQ) form a modulating region. The residue at position 12 (Ser12) is a Phosphoserine; by CK2. Phosphoserine is present on Ser28. Residues Cys51, Cys54, Cys68, Cys71, Cys89, Cys95, Cys105, and Cys108 each contribute to the Zn(2+) site. 2 consecutive NR C4-type zinc fingers follow at residues 51 to 71 (CVVC…CEGC) and 89 to 113 (CKYD…FKKC). Positions 51–125 (CVVCGDKATG…VGMAMDLVLD (75 aa)) form a DNA-binding region, nuclear receptor. An NR LBD domain is found at 161-402 (EEWELIHVVT…ELFPPLFLEV (242 aa)). Positions 226 and 275 each coordinate 3,3',5-triiodo-L-thyronine.

Belongs to the nuclear hormone receptor family. NR1 subfamily. In terms of assembly, probably interacts with SFPQ.

The protein resides in the nucleus. Nuclear hormone receptor that can act as a repressor or activator of transcription. High affinity receptor for thyroid hormones, including triiodothyronine and thyroxine. This chain is Thyroid hormone receptor alpha (THRA), found in Aptenodytes patagonicus (King penguin).